The primary structure comprises 681 residues: Methionine--tRNA ligase (681 aa).

The 'HIGH' region motif lies at 12–22; that stretch reads PYANGSIHLGH. 4 residues coordinate Zn(2+): C143, C146, C156, and C159. A 'KMSKS' region motif is present at residues 327-331; the sequence is KMSKS. K330 serves as a coordination point for ATP. Over residues 545–557 the composition is skewed to basic and acidic residues; sequence FEKSNPEKAKQDP. A disordered region spans residues 545-566; the sequence is FEKSNPEKAKQDPSKSNTNEVK. In terms of domain architecture, tRNA-binding spans 580-681; that stretch reads ELSKVELRVG…RDASPGDLLK (102 aa).

The protein belongs to the class-I aminoacyl-tRNA synthetase family. MetG type 1 subfamily. Homodimer. It depends on Zn(2+) as a cofactor.

It localises to the cytoplasm. The enzyme catalyses tRNA(Met) + L-methionine + ATP = L-methionyl-tRNA(Met) + AMP + diphosphate. Its function is as follows. Is required not only for elongation of protein synthesis but also for the initiation of all mRNA translation through initiator tRNA(fMet) aminoacylation. In Leptospira biflexa serovar Patoc (strain Patoc 1 / ATCC 23582 / Paris), this protein is Methionine--tRNA ligase.